Reading from the N-terminus, the 1932-residue chain is MSQQDSQRWLPTDRLIYGVLVKSFLPLQRYPELVYENSNYANVYVGAEVYVFEESVDKKWCRAYQCLRPFPEEFISNMNSANDVLPDVKPKVVIFPRKYVHFEAEKAVSTMPFFKAPSAEDFKPLISKECESRSFCDSLYVSSTDDISTGKPRKTPRPPFPFFRYQKRSFKDEMGPILSLISSHVYSMYSIGEFSIYRKMIKLYYDLDTIRFRLSMNLTTEAEKINLIRAATSLRTKIAKFLSSTYRKNKLIANSTPRNPDPYGFEGIFARDIDTGELLSYEIDKLRTLVSSSMLCGLTNNFPTVPVVESDDESSSNGLFGTVRSSILVNLKDLAWDPSISDPKYQDLSICVYLRTKDEVLTESFTMTKSSNMESALDEIPAMLFKNILETIVHKNKVYLVVVLKETIAITTETAPEISSYNISTEESSSHSPFSPFNSSTENKIDHVKKGLAAGVINISPVFKFYNGLSVANKAQRFNLYLYSSDSSDSQNFNSSKDADLGWGGLINKIIKDSSEGVSVNPRAVSLSVTVKEIIGKQEAEKVLSTSLVPIRSIPTYFYDTMFSQAERIYLNLGRVSLYGLPAADTNIENVTVQISCRNKAVKFCKNKLEERSGDWKFVSVRPNESIGESIRIEGVENMNEDETLRVLVYLNGFLMAKSNIHIKKKNEIIEYRKGTVFQIMSSKSVPLIHLELEASYFGRRYNINPAITNFLVLQTKNVEFDQQLKEHYSVTLKQLNNVSFKDLLKHFDTILAHYLLLLESVNEATDKKGPSSSLPNIVFSEFVKFLNLMLTHQENSRYWFNRLYKKVMSKELECPNVAPILIKHMTTIFDRSHSSWTRTGTAICRTILYIIVLAIGSSHSDEMPNFSHFFRSLHKFLMLADEPIMADQILLIESIPSMLETMTNHCKVEDLVRFAIGLFECCQEKEMNQKMYSRPLSVREEEYLNTKFNCLLKLINKKVLQNYLTNTESVDKLRLQFLSKTLEWLLTPYTPGDDKCFHVESLRLVNSVFITIIEDYKFDMLQRNLIRLLPYLCKSFVHLRRYCKKARLMRPRRVFTMLFPREIPCNYIPVDSIVNDEVVVEVLLELAIIICEITKIASSRFPSYQSFSEIINLCDKDTLFQSNFYSRQITNENVYTITKTVFLFFKQDWFPGMKWLGVSALLGRSSLILLSLCKDYIIENNSPSPSKESEKRVDMRLWAEYVKVILLVSNHKSASLTKLAITPRKAVYLISGDLKKISAYILNECWDALATGHYNITYAKKYGLGALSDCQFELFVHNQFLIREIFIFAFHRHIDATRICCKILWGLGLNFWRIFGSLQPAVNACIPELFSAYQIGKLRLNDYELERFVSCLFFMMHVPDSDTFFPACMDFLRDLLGFLHIVNEIYKIPNQEEFDDDRTARHIEMFEYLLEANRPELFHKMIYDLFIHFIQKKDFVQAALSLELLAGTYAWDSNDTLEAISFPPLPEQSSFERKEYLLKESARNFSRGQKPEKALAVYKDLIKAYDEINYDLNGLAFVHDQIAGIYTRLQSIDRLVPTYFKVSFMGFGFPKSLRNKSFVFEGLPFEHITSMHDRLLRSYHGSNIVHSQEEVDMLLMNPPMGKYIHVASVEPCLSISDNYNSSDKKSSINNKVRMYIENRDLRTFSNSRRLPGAKGVTDLWVEEYTYHTMNTFPTLMNRSEIVKVTKSKLSPLENAIRSLQVKIQELYGLENMCNKTLKDHGDVNDLFTELSTNITGTISAPVNGGISQYKAFLEPSTSKQFSTDDLGRLTLAFDELVAVLGRCLTLHAELLPSKDLKPSHDLLVRLFEENFAEEIERYSRTLSEANRSRNNMITARIISHKNPNKKASFSGRDHHTSGSNHSQFVLEHSDSFGPNSLLFGKYLTRTLSHSSTTSSLDKSGIVSGTSSTFLAGSQPNTNTDSQHKHDYSHSG.

Positions 1410–1824 constitute a DOCKER domain; the sequence is LLEANRPELF…EIERYSRTLS (415 aa). Over residues 1908–1921 the composition is skewed to polar residues; sequence STFLAGSQPNTNTD. Residues 1908 to 1932 form a disordered region; the sequence is STFLAGSQPNTNTDSQHKHDYSHSG. Basic and acidic residues predominate over residues 1922–1932; it reads SQHKHDYSHSG.

This sequence belongs to the DOCK family. Forms an active heterodimer with LMO1.

The protein resides in the cytoplasm. Its subcellular location is the mitochondrion. Its function is as follows. Forms a transiant heterodimeric complex with LMO1, that acts as a guanine nucleotide exchange factor exchange factor (GEF) for the small GTPase RHO5. DCK1, LMO1 and RHO5 relocate to mitochondria upon oxidative stress and trigger cell death. The DCK1/LMO1/RHO5 signaling module mediates mitochondrial turnover under nitrogen starvation conditions via mitophagy. The DCK1/LMO1/RHO5 signaling module plays also a function in cell wall integrity signaling. This Saccharomyces cerevisiae (strain ATCC 204508 / S288c) (Baker's yeast) protein is DOCK-like protein 1.